The chain runs to 2474 residues: Highly reducing polyketide synthase 40 (2474 aa).

The region spanning 1–294 (MFKETEIQQR…GSNAHIIIDD (294 aa)) is the Ketosynthase family 3 (KS3) domain. Residues cysteine 42, histidine 177, and histidine 217 each act as for beta-ketoacyl synthase activity in the active site. The region spanning 459–798 (FVFTGQGAQW…GYESVLRRGT (340 aa)) is the Malonyl-CoA:ACP transacylase (MAT) domain. Residues 864–998 (HELLGAPVPD…GLVVTEYEQP (135 aa)) are N-terminal hotdog fold. The PKS/mFAS DH domain maps to 864–1182 (HELLGAPVPD…ITTVARSEGA (319 aa)). The Proton acceptor; for dehydratase activity role is filled by histidine 896. Positions 1027 to 1182 (KVETSFRQLY…ITTVARSEGA (156 aa)) are C-terminal hotdog fold. Catalysis depends on aspartate 1093, which acts as the Proton donor; for dehydratase activity. Residues 1232–1535 (VEMMCFLYIK…DLHIYDFPDH (304 aa)) are methyltransferase (CMet) domain. The 294-residue stretch at 1770-2063 (GLLDSLQFQD…SGSHMGKLVL (294 aa)) folds into the Enoyl reductase (ER) domain. In terms of domain architecture, Ketoreductase (KR) spans 2087-2263 (ASYLLSGGLG…PGVAVDLGMI (177 aa)). Positions 2385 to 2462 (DAAKIVSAAI…ELAELAAKRS (78 aa)) constitute a Carrier domain. Serine 2422 is subject to O-(pantetheine 4'-phosphoryl)serine.

The cofactor is pantetheine 4'-phosphate.

Its pathway is secondary metabolite biosynthesis. Functionally, highly reducing polyketide synthase; part of the gene cluster that mediates the biosynthesis of the gamma-pyrones fusapyrone (FPY) and deoxyfusapyrone (dFPY). FPY is an undecaketide and thus likely synthesized by the polyketide synthase FPY1 from acetyl-CoA functioning as starter unit and the addition of 10 malonyl-CoA extender units by successive Claisen-condensations. Next to this, FPY shares some rare features: C-glycosylated 4-deoxyglucose at C-3, a gem-dimethyl group at C-13, and an alpha-beta to beta-gamma double bond shift at C-20. During FPY biosynthesis mono-C-methyl groups are transferred to the tetra-, penta-, hexa- and heptaketide, while two C-methyl groups are transferred to the nonaketide, suggesting that the CMet domain is programmed to selectively catalyze two successive C-alpha-methylation reactions of the nonaketide, while other alpha-carbons are non- or mono-methylated only. While the origin of the 4'-deoxyglucose moiety remains opaque, its transfer to C-3 is most likely mediated by the C-glycosyltransferase FPY2. Next to this, the hydroxyl group present at C-33 and discriminating between FPY and dFPY, is likely to be installed by the cytochrome P450 monooxygenase FPY7. No putative function can be predicted for the remaining genes FPY3-FPY6. This is Highly reducing polyketide synthase 40 from Fusarium mangiferae (Mango malformation disease fungus).